The chain runs to 150 residues: Large ribosomal subunit protein uL13 (150 aa).

A disordered region spans residues 129–150 (AEHPHAAQQPKPLQLDPAATAQ).

The protein belongs to the universal ribosomal protein uL13 family. In terms of assembly, part of the 50S ribosomal subunit.

Functionally, this protein is one of the early assembly proteins of the 50S ribosomal subunit, although it is not seen to bind rRNA by itself. It is important during the early stages of 50S assembly. The sequence is that of Large ribosomal subunit protein uL13 from Synechococcus sp. (strain WH7803).